Here is a 286-residue protein sequence, read N- to C-terminus: Bifunctional protein FolD (286 aa).

NADP(+) is bound by residues 165–167, Ser-190, and Val-231; that span reads GRS.

Belongs to the tetrahydrofolate dehydrogenase/cyclohydrolase family. Homodimer.

It carries out the reaction (6R)-5,10-methylene-5,6,7,8-tetrahydrofolate + NADP(+) = (6R)-5,10-methenyltetrahydrofolate + NADPH. It catalyses the reaction (6R)-5,10-methenyltetrahydrofolate + H2O = (6R)-10-formyltetrahydrofolate + H(+). It functions in the pathway one-carbon metabolism; tetrahydrofolate interconversion. Its function is as follows. Catalyzes the oxidation of 5,10-methylenetetrahydrofolate to 5,10-methenyltetrahydrofolate and then the hydrolysis of 5,10-methenyltetrahydrofolate to 10-formyltetrahydrofolate. The protein is Bifunctional protein FolD of Bacillus cereus (strain AH187).